The following is a 329-amino-acid chain: NADH-quinone oxidoreductase subunit H (329 aa).

9 helical membrane-spanning segments follow: residues 9-29 (LIKILILVAVFSALGGFATYI), 42-62 (GPCYVGPFGLLQVAADGIKLF), 75-95 (FIFTLAPIIAMVSAFVSMAPI), 117-137 (IGFLFFLAVGSAGIYAPILAG), 154-174 (IQLLSFEVVSTLTILAPLMVV), 188-208 (GGFLDWLVFKQPLAFVLFLIA), 238-258 (LKWGMFFLAEYAHLFAFSFVI), 269-291 (WGFIPGGIAILIKAGFFVFLSMW), and 309-329 (WKIMLPLALLNIVLTGIVILI).

The protein belongs to the complex I subunit 1 family. As to quaternary structure, NDH-1 is composed of 14 different subunits. Subunits NuoA, H, J, K, L, M, N constitute the membrane sector of the complex.

It is found in the cell inner membrane. The catalysed reaction is a quinone + NADH + 5 H(+)(in) = a quinol + NAD(+) + 4 H(+)(out). In terms of biological role, NDH-1 shuttles electrons from NADH, via FMN and iron-sulfur (Fe-S) centers, to quinones in the respiratory chain. The immediate electron acceptor for the enzyme in this species is believed to be ubiquinone. Couples the redox reaction to proton translocation (for every two electrons transferred, four hydrogen ions are translocated across the cytoplasmic membrane), and thus conserves the redox energy in a proton gradient. This subunit may bind ubiquinone. This Helicobacter pylori (strain J99 / ATCC 700824) (Campylobacter pylori J99) protein is NADH-quinone oxidoreductase subunit H.